A 73-amino-acid polypeptide reads, in one-letter code: Adipokinetic prohormone type 2 (73 aa).

An N-terminal signal peptide occupies residues 1–20 (MCRIFIVLLVVAALAIIIEG). Gln21 is subject to Pyrrolidone carboxylic acid. Residue Asn30 is modified to Asparagine amide. A propeptide spanning residues 34–73 (SISSEQINDDCNPEEAIFQIYKLIVSEGERIRACQRDGKM) is cleaved from the precursor.

In terms of tissue distribution, expressed in corpora cardiaca (CC), corpora allata (CA) and gnathal ganglion (GNG) (at protein level). Expression in CC and CA detected in all animals, expression in GNG detected in few animals (at protein level). Not expressed in antennal lobe (AL) (at protein level).

Its subcellular location is the secreted. This hormone, released from cells in the corpora cardiaca, causes release of diglycerides from the fat body and stimulation of muscles to use these diglycerides as an energy source during energy-demanding processes. This chain is Adipokinetic prohormone type 2, found in Agrotis ipsilon (Black cutworm moth).